The sequence spans 481 residues: Endoplasmic reticulum lectin 1 (481 aa).

A signal peptide spans 1-27 (MRRSDRLRCAGASLLVVLCGVFRSSFG). 2 consecutive MRH domains span residues 108–245 (SSCS…LCNH) and 340–467 (SYCF…ICKI). 6 disulfides stabilise this stretch: cysteine 110/cysteine 123, cysteine 198/cysteine 231, cysteine 214/cysteine 243, cysteine 342/cysteine 355, cysteine 419/cysteine 453, and cysteine 434/cysteine 465.

It is found in the endoplasmic reticulum lumen. Its function is as follows. Probable lectin that binds selectively to improperly folded lumenal proteins. May function in endoplasmic reticulum quality control and endoplasmic reticulum-associated degradation (ERAD) of both non-glycosylated proteins and glycoproteins. The chain is Endoplasmic reticulum lectin 1 (erlec1) from Xenopus tropicalis (Western clawed frog).